Consider the following 251-residue polypeptide: Insertion sequence IS5376 putative ATP-binding protein (251 aa).

Gly-105 to Thr-112 is an ATP binding site.

It belongs to the IS21/IS1162 putative ATP-binding protein family.

The polypeptide is Insertion sequence IS5376 putative ATP-binding protein (Geobacillus stearothermophilus (Bacillus stearothermophilus)).